A 412-amino-acid chain; its full sequence is Polyferredoxin protein MvhB (412 aa).

12 consecutive 4Fe-4S ferredoxin-type domains span residues 2-29 (IIVN…VTPE), 30-57 (DVIY…LEDL), 67-96 (GRIV…LDEG), 97-127 (KVKK…VEGI), 138-166 (EGPI…LDKV), 168-197 (GVIE…ISGR), 207-236 (KKFE…PRTS), 238-266 (LTVE…LEVE), 276-305 (EGLV…VVTK), 314-345 (EKVD…LVDM), 357-386 (KRVQ…LTDE), and 385-412 (DEKV…LSLK). Residues C9, C12, C15, and C19 each contribute to the [4Fe-4S] cluster site. Residues C76, C79, C82, C86, C107, C110, C113, C117, C146, C149, C152, C156, C177, C180, C183, C187, C216, C219, C222, C226, C246, C249, C252, and C256 each coordinate [4Fe-4S] cluster. [4Fe-4S] cluster-binding residues include C325, C328, C331, C335, C366, C369, C372, C376, C394, C397, C400, and C404.

[4Fe-4S] cluster is required as a cofactor.

In Methanothermobacter thermautotrophicus (strain ATCC 29096 / DSM 1053 / JCM 10044 / NBRC 100330 / Delta H) (Methanobacterium thermoautotrophicum), this protein is Polyferredoxin protein MvhB (mvhB).